A 48-amino-acid chain; its full sequence is Disintegrin leucogastin-A (48 aa).

One can recognise a Disintegrin domain in the interval 1-47 (DCASGPCCRDCKFLEEFTICNMARGDDMNDYCNGKTCDCPRNPHKWP). 4 disulfides stabilise this stretch: C2–C11, C7–C32, C8–C37, and C20–C39. The Cell attachment site signature appears at 24 to 26 (RGD).

It belongs to the venom metalloproteinase (M12B) family. P-II subfamily. P-IIa sub-subfamily. As to quaternary structure, monomer (disintegrin). As to expression, expressed by the venom gland.

It localises to the secreted. Functionally, inhibits ADP-induced human platelet aggregation. In Echis leucogaster (Roman's saw-scaled viper), this protein is Disintegrin leucogastin-A.